Consider the following 433-residue polypeptide: tRNA(Ile)-lysidine synthase (433 aa).

37–42 serves as a coordination point for ATP; the sequence is SGGKDS.

The protein belongs to the tRNA(Ile)-lysidine synthase family.

It is found in the cytoplasm. The enzyme catalyses cytidine(34) in tRNA(Ile2) + L-lysine + ATP = lysidine(34) in tRNA(Ile2) + AMP + diphosphate + H(+). Functionally, ligates lysine onto the cytidine present at position 34 of the AUA codon-specific tRNA(Ile) that contains the anticodon CAU, in an ATP-dependent manner. Cytidine is converted to lysidine, thus changing the amino acid specificity of the tRNA from methionine to isoleucine. The chain is tRNA(Ile)-lysidine synthase from Leptospira interrogans serogroup Icterohaemorrhagiae serovar copenhageni (strain Fiocruz L1-130).